The primary structure comprises 303 residues: Eukaryotic translation initiation factor 3 subunit F (303 aa).

Over residues 1-10 the composition is skewed to polar residues; it reads MSLDTSSSAI. The interval 1 to 25 is disordered; it reads MSLDTSSSAIHLQLPPTSSSLRPPS. The span at 12–25 shows a compositional bias: low complexity; that stretch reads LQLPPTSSSLRPPS. Positions 27 to 165 constitute an MPN domain; that stretch reads ITVHPSVIAQ…VKGWVSQPLG (139 aa).

It belongs to the eIF-3 subunit F family. Component of the eukaryotic translation initiation factor 3 (eIF-3) complex.

The protein localises to the cytoplasm. Functionally, component of the eukaryotic translation initiation factor 3 (eIF-3) complex, which is involved in protein synthesis of a specialized repertoire of mRNAs and, together with other initiation factors, stimulates binding of mRNA and methionyl-tRNAi to the 40S ribosome. The eIF-3 complex specifically targets and initiates translation of a subset of mRNAs involved in cell proliferation. This Cryptococcus neoformans var. neoformans serotype D (strain B-3501A) (Filobasidiella neoformans) protein is Eukaryotic translation initiation factor 3 subunit F.